The sequence spans 132 residues: Small ribosomal subunit protein uS8 (132 aa).

The protein belongs to the universal ribosomal protein uS8 family. As to quaternary structure, part of the 30S ribosomal subunit. Contacts proteins S5 and S12.

One of the primary rRNA binding proteins, it binds directly to 16S rRNA central domain where it helps coordinate assembly of the platform of the 30S subunit. This chain is Small ribosomal subunit protein uS8, found in Leuconostoc citreum (strain KM20).